The primary structure comprises 266 residues: Dihydropteroate synthase (266 aa).

Positions 12–260 (AAIMGILNVT…DVKANQDIVA (249 aa)) constitute a Pterin-binding domain. Asparagine 19 contributes to the Mg(2+) binding site. (7,8-dihydropterin-6-yl)methyl diphosphate is bound by residues threonine 59, aspartate 93, asparagine 112, aspartate 176, lysine 212, and 248 to 250 (RVH).

Belongs to the DHPS family. In terms of assembly, homodimer or homotrimer. Mg(2+) is required as a cofactor.

It carries out the reaction (7,8-dihydropterin-6-yl)methyl diphosphate + 4-aminobenzoate = 7,8-dihydropteroate + diphosphate. The protein operates within cofactor biosynthesis; tetrahydrofolate biosynthesis; 7,8-dihydrofolate from 2-amino-4-hydroxy-6-hydroxymethyl-7,8-dihydropteridine diphosphate and 4-aminobenzoate: step 1/2. Its function is as follows. Catalyzes the condensation of para-aminobenzoate (pABA) with 6-hydroxymethyl-7,8-dihydropterin diphosphate (DHPt-PP) to form 7,8-dihydropteroate (H2Pte), the immediate precursor of folate derivatives. This is Dihydropteroate synthase (folP) from Streptococcus pyogenes serotype M6 (strain ATCC BAA-946 / MGAS10394).